Consider the following 430-residue polypeptide: Glutamate-1-semialdehyde 2,1-aminomutase (430 aa).

Lys-265 is modified (N6-(pyridoxal phosphate)lysine).

It belongs to the class-III pyridoxal-phosphate-dependent aminotransferase family. HemL subfamily. As to quaternary structure, homodimer. It depends on pyridoxal 5'-phosphate as a cofactor.

The protein localises to the cytoplasm. It catalyses the reaction (S)-4-amino-5-oxopentanoate = 5-aminolevulinate. It functions in the pathway porphyrin-containing compound metabolism; protoporphyrin-IX biosynthesis; 5-aminolevulinate from L-glutamyl-tRNA(Glu): step 2/2. The protein is Glutamate-1-semialdehyde 2,1-aminomutase of Shewanella putrefaciens (strain CN-32 / ATCC BAA-453).